The following is a 416-amino-acid chain: N-acetyl-L-cysteine deacetylase (416 aa).

5 residues coordinate Zn(2+): Cys128, His130, Glu164, His188, and His380.

Belongs to the peptidase M20 family. Zn(2+) is required as a cofactor. It depends on Co(2+) as a cofactor.

It carries out the reaction N-acetyl-L-cysteine + H2O = L-cysteine + acetate. It participates in amino-acid metabolism. Functionally, involved in a cysteine salvage pathway from S-alkylcysteine. Catalyzes the last step in this pathway, i.e. the deacetylation of N-acetyl-L-cysteine. This pathway is likely important in the catabolism of alkylated cysteine generated by proteolysis of alkylated glutathione formed in the detoxification of a wide range of electrophiles. This chain is N-acetyl-L-cysteine deacetylase, found in Bacillus subtilis (strain 168).